Reading from the N-terminus, the 493-residue chain is Cysteine--tRNA ligase (493 aa).

C29 contributes to the Zn(2+) binding site. The 'HIGH' region motif lies at V31 to H41. Residues C209, H234, and E238 each contribute to the Zn(2+) site. Residues K266–S270 carry the 'KMSKS' region motif. Position 269 (K269) interacts with ATP.

This sequence belongs to the class-I aminoacyl-tRNA synthetase family. In terms of assembly, monomer. Zn(2+) serves as cofactor.

It is found in the cytoplasm. The enzyme catalyses tRNA(Cys) + L-cysteine + ATP = L-cysteinyl-tRNA(Cys) + AMP + diphosphate. This is Cysteine--tRNA ligase from Pelobacter propionicus (strain DSM 2379 / NBRC 103807 / OttBd1).